The primary structure comprises 485 residues: Outer membrane protein OprM (485 aa).

The first 17 residues, 1–17 (MKRSFLSLAVAAVVLSG), serve as a signal peptide directing secretion. C18 carries N-palmitoyl cysteine lipidation. Residue C18 is the site of S-diacylglycerol cysteine attachment.

It belongs to the outer membrane factor (OMF) (TC 1.B.17) family. As to quaternary structure, component of the MexAB-OprM multidrug efflux complex, composed of six MexA subunits forming a hexameric tube, binding to a MexB trimer, which interact with the trimeric OprM outer membrane channel protein. The OprM homotrimer forms a 135 Angstroms-long pore. It consists of a beta-barrel, which is probably inserted in the outer membrane, and an alpha-barrel formed by alpha-helices which probably spans the periplasm. In the ground state the periplasmic end is closed, while the outer membrane end opening is 6-8 Angstroms in diameter. OprM does not directly contact MexB; instead, MexA joins MexB and OprM by forming a funnel-like hexamer anchored to the inner membrane. MexA may initially form a hexameric ring complex with MexB prior to OprM, then OprM undergoes a conformational change as it contacts MexA, allowing the periplasmic gate to open. It is thought that, under high intracellular substrate concentration, MexB ejects substrate into the tunnel formed by MexA-OprM; as the substrate level declines, conformational changes in MexB cause efflux to reduce and stop and the complex shifts to the closed state. MexB subunit acts as a substrate:proton antiporter and activity is enhanced significantly when in complex with MexA and OprM, in vitro.

It localises to the cell outer membrane. Export of antibiotics and solvents is dramatically decreased in the presence of the protonophore carbonyl cyanide m-chlorophenylhydrazone (CCCP), therefore may be driven by a proton gradient. Antibiotic efflux is inhibited by pyridopyrimidine derivatives, such as ABI-PP, acting by binding to a hydrophobic pocket in MexB. In terms of biological role, the outer membrane component of the MexAB-OprM efflux system that confers multidrug resistance. Functions as the major efflux pump for n-hexane and p-xylene efflux. Has been shown in one study to be involved in the active efflux of the autoinducer N-(3-oxododecanoyl) homoserine lactone, thereby playing an indirect role in quorum-sensing; but has been shown in another study not to be involved in efflux of this autoinducer. Over-expression of the pump increases antibiotic and solvent efflux capacities. Can replace the OprJ outer membrane component of the MexCD-OprJ pump; the antibiotics exported are those exported by the intact MexCD pump, showing that efflux substrate specificity is not conferred by this component. Serves as the outer membrane component for the MexXY efflux system. Implicated in the secretion of the siderophore pyoverdine. OprM is probably involved in the efflux of the siderophore across the outer membrane. This is Outer membrane protein OprM (oprM) from Pseudomonas aeruginosa (strain ATCC 15692 / DSM 22644 / CIP 104116 / JCM 14847 / LMG 12228 / 1C / PRS 101 / PAO1).